Consider the following 169-residue polypeptide: Glycine-rich RNA-binding protein GRP2A (169 aa).

Residues 8–86 (YRCFVGGLAW…RSITVNEAQS (79 aa)) form the RRM domain. Disordered regions lie at residues 69 to 100 (MNGQ…GGGG) and 125 to 169 (YSGG…GGGW). A compositionally biased stretch (gly residues) spans 89 to 100 (SGAGGGGRGGGG).

Predominantly expressed in meristematic and growing tissue.

The protein localises to the nucleus. May play a general role in circadian phenomena associated with meristematic tissue. This is Glycine-rich RNA-binding protein GRP2A from Sinapis alba (White mustard).